Here is a 429-residue protein sequence, read N- to C-terminus: Enolase (429 aa).

Glutamine 163 provides a ligand contact to (2R)-2-phosphoglycerate. The active-site Proton donor is the glutamate 205. Mg(2+) is bound by residues aspartate 242, glutamate 286, and aspartate 313. Positions 338, 367, 368, and 389 each coordinate (2R)-2-phosphoglycerate. Lysine 338 (proton acceptor) is an active-site residue.

This sequence belongs to the enolase family. Mg(2+) is required as a cofactor.

Its subcellular location is the cytoplasm. The protein resides in the secreted. The protein localises to the cell surface. It carries out the reaction (2R)-2-phosphoglycerate = phosphoenolpyruvate + H2O. Its pathway is carbohydrate degradation; glycolysis; pyruvate from D-glyceraldehyde 3-phosphate: step 4/5. Functionally, catalyzes the reversible conversion of 2-phosphoglycerate (2-PG) into phosphoenolpyruvate (PEP). It is essential for the degradation of carbohydrates via glycolysis. In Pelobacter propionicus (strain DSM 2379 / NBRC 103807 / OttBd1), this protein is Enolase.